We begin with the raw amino-acid sequence, 235 residues long: Small ribosomal subunit protein uS2c (235 aa).

The protein belongs to the universal ribosomal protein uS2 family.

The protein localises to the plastid. It is found in the chloroplast. This Cryptomeria japonica (Japanese cedar) protein is Small ribosomal subunit protein uS2c (rps2).